The chain runs to 128 residues: MAQVPAGKNRSGQLSKQTGDAWENQARRWLEGQGLRFIAANARERGGEIDLIMRDGTVTVFIEVRYRRSARYGDAAASVTPQKQQRLLKAARLWLCRQNGSFETVDCRFDVVAFTGNDIQWLKNAFGE.

Positions 1 to 20 are disordered; that stretch reads MAQVPAGKNRSGQLSKQTGD.

The protein belongs to the UPF0102 family.

The polypeptide is UPF0102 protein KPN78578_35270 (Klebsiella pneumoniae subsp. pneumoniae (strain ATCC 700721 / MGH 78578)).